The primary structure comprises 90 residues: Conotoxin Mr22.1 (90 aa).

Positions 1–18 (MMTRVFFAMFFLMALTEG) are cleaved as a signal peptide. Positions 19 to 49 (WPRLYDSDCVRGRNMHITCFKDQTCGLTVKR) are excised as a propeptide. Trp-75 bears the 6'-bromotryptophan mark.

The protein belongs to the E superfamily. In terms of processing, contains 4 disulfide bonds. As to expression, expressed by the venom duct.

Its subcellular location is the secreted. The polypeptide is Conotoxin Mr22.1 (Conus marmoreus (Marble cone)).